A 162-amino-acid chain; its full sequence is NADH-quinone oxidoreductase subunit E (162 aa).

Residues cysteine 88, cysteine 93, cysteine 129, and cysteine 133 each contribute to the [2Fe-2S] cluster site.

This sequence belongs to the complex I 24 kDa subunit family. As to quaternary structure, composed of 13 different subunits. Subunits NuoCD, E, F, and G constitute the peripheral sector of the complex. It depends on [2Fe-2S] cluster as a cofactor.

The catalysed reaction is a quinone + NADH + 5 H(+)(in) = a quinol + NAD(+) + 4 H(+)(out). In terms of biological role, NDH-1 shuttles electrons from NADH, via FMN and iron-sulfur (Fe-S) centers, to quinones in the respiratory chain. Couples the redox reaction to proton translocation (for every two electrons transferred, four hydrogen ions are translocated across the cytoplasmic membrane), and thus conserves the redox energy in a proton gradient. This chain is NADH-quinone oxidoreductase subunit E (nuoE), found in Buchnera aphidicola subsp. Acyrthosiphon pisum (strain APS) (Acyrthosiphon pisum symbiotic bacterium).